Consider the following 185-residue polypeptide: Elongation factor P (185 aa).

It belongs to the elongation factor P family.

It is found in the cytoplasm. It functions in the pathway protein biosynthesis; polypeptide chain elongation. Functionally, involved in peptide bond synthesis. Stimulates efficient translation and peptide-bond synthesis on native or reconstituted 70S ribosomes in vitro. Probably functions indirectly by altering the affinity of the ribosome for aminoacyl-tRNA, thus increasing their reactivity as acceptors for peptidyl transferase. The protein is Elongation factor P of Thermoanaerobacter sp. (strain X514).